The following is a 215-amino-acid chain: Cytochrome b6 (215 aa).

The chain crosses the membrane as a helical span at residues 32-52; sequence IFYCFGGITFTCFLVQVATGF. Residue Cys-35 coordinates heme c. Residues His-86 and His-100 each coordinate heme b. Transmembrane regions (helical) follow at residues 90 to 110, 116 to 136, and 186 to 206; these read ASMM…TGGF, LTWV…VTGY, and LHTF…FLMI. His-187 and His-202 together coordinate heme b.

It belongs to the cytochrome b family. PetB subfamily. As to quaternary structure, the 4 large subunits of the cytochrome b6-f complex are cytochrome b6, subunit IV (17 kDa polypeptide, PetD), cytochrome f and the Rieske protein, while the 4 small subunits are PetG, PetL, PetM and PetN. The complex functions as a dimer. It depends on heme b as a cofactor. Heme c is required as a cofactor.

Its subcellular location is the plastid. It is found in the chloroplast thylakoid membrane. In terms of biological role, component of the cytochrome b6-f complex, which mediates electron transfer between photosystem II (PSII) and photosystem I (PSI), cyclic electron flow around PSI, and state transitions. The protein is Cytochrome b6 of Auxenochlorella protothecoides (Green microalga).